A 644-amino-acid chain; its full sequence is Exoribonuclease 2 (644 aa).

The region spanning 189-516 is the RNB domain; the sequence is RQDLTALNFV…NHRLLKAVIK (328 aa). Positions 561–643 constitute an S1 motif domain; that stretch reads NTRFAAEIID…ETRSIIARPA (83 aa).

This sequence belongs to the RNR ribonuclease family. RNase II subfamily.

It localises to the cytoplasm. It catalyses the reaction Exonucleolytic cleavage in the 3'- to 5'-direction to yield nucleoside 5'-phosphates.. Its function is as follows. Involved in mRNA degradation. Hydrolyzes single-stranded polyribonucleotides processively in the 3' to 5' direction. This Salmonella gallinarum (strain 287/91 / NCTC 13346) protein is Exoribonuclease 2.